We begin with the raw amino-acid sequence, 705 residues long: Elongation factor G (705 aa).

A tr-type G domain is found at 8–290 (HRYRNIGIMA…GVIHLLPSPA (283 aa)). GTP is bound by residues 17-24 (AHIDAGKT), 88-92 (DTPGH), and 142-145 (NKMD).

It belongs to the TRAFAC class translation factor GTPase superfamily. Classic translation factor GTPase family. EF-G/EF-2 subfamily.

The protein resides in the cytoplasm. Catalyzes the GTP-dependent ribosomal translocation step during translation elongation. During this step, the ribosome changes from the pre-translocational (PRE) to the post-translocational (POST) state as the newly formed A-site-bound peptidyl-tRNA and P-site-bound deacylated tRNA move to the P and E sites, respectively. Catalyzes the coordinated movement of the two tRNA molecules, the mRNA and conformational changes in the ribosome. In Xylella fastidiosa (strain M23), this protein is Elongation factor G.